A 187-amino-acid chain; its full sequence is Probable nicotinate-nucleotide adenylyltransferase (187 aa).

The protein belongs to the NadD family.

The catalysed reaction is nicotinate beta-D-ribonucleotide + ATP + H(+) = deamido-NAD(+) + diphosphate. It functions in the pathway cofactor biosynthesis; NAD(+) biosynthesis; deamido-NAD(+) from nicotinate D-ribonucleotide: step 1/1. In terms of biological role, catalyzes the reversible adenylation of nicotinate mononucleotide (NaMN) to nicotinic acid adenine dinucleotide (NaAD). This Anaeromyxobacter dehalogenans (strain 2CP-C) protein is Probable nicotinate-nucleotide adenylyltransferase.